Consider the following 88-residue polypeptide: Putative defensin-like protein 256 (88 aa).

The N-terminal stretch at 1-25 (MKSSIFFKLLLLVSLLVVIFRQSYA) is a signal peptide. 3 disulfides stabilise this stretch: C30/C46, C36/C53, and C40/C55.

This sequence belongs to the DEFL family.

It localises to the secreted. This Arabidopsis thaliana (Mouse-ear cress) protein is Putative defensin-like protein 256.